We begin with the raw amino-acid sequence, 332 residues long: Tryptophan--tRNA ligase (332 aa).

ATP-binding positions include 11–13 (QPS) and 19–20 (GN). Positions 12 to 20 (PSGELTIGN) match the 'HIGH' region motif. Asp-135 serves as a coordination point for L-tryptophan. Residues 147 to 149 (GQD), Val-186, and 195 to 199 (KMSKS) each bind ATP. The short motif at 195–199 (KMSKS) is the 'KMSKS' region element.

This sequence belongs to the class-I aminoacyl-tRNA synthetase family. In terms of assembly, homodimer.

The protein localises to the cytoplasm. It carries out the reaction tRNA(Trp) + L-tryptophan + ATP = L-tryptophyl-tRNA(Trp) + AMP + diphosphate + H(+). Its function is as follows. Catalyzes the attachment of tryptophan to tRNA(Trp). This is Tryptophan--tRNA ligase from Shewanella oneidensis (strain ATCC 700550 / JCM 31522 / CIP 106686 / LMG 19005 / NCIMB 14063 / MR-1).